A 218-amino-acid chain; its full sequence is Cytidylate kinase (218 aa).

11 to 19 (GPGASGKGT) is a binding site for ATP.

The protein belongs to the cytidylate kinase family. Type 1 subfamily.

The protein resides in the cytoplasm. It carries out the reaction CMP + ATP = CDP + ADP. The catalysed reaction is dCMP + ATP = dCDP + ADP. The protein is Cytidylate kinase of Neisseria meningitidis serogroup B (strain ATCC BAA-335 / MC58).